Here is a 238-residue protein sequence, read N- to C-terminus: uncharacterized protein (238 aa).

The helical transmembrane segment at 10 to 33 (TLLALMISLSLSSLLLLSISHFYV) threads the bilayer.

It is found in the membrane. This is an uncharacterized protein from Haemophilus influenzae (strain ATCC 51907 / DSM 11121 / KW20 / Rd).